Consider the following 55-residue polypeptide: Large ribosomal subunit protein bL33 (55 aa).

Belongs to the bacterial ribosomal protein bL33 family.

In Caulobacter vibrioides (strain ATCC 19089 / CIP 103742 / CB 15) (Caulobacter crescentus), this protein is Large ribosomal subunit protein bL33.